The sequence spans 386 residues: Succinate--CoA ligase [ADP-forming] subunit beta (386 aa).

The region spanning 9–244 (KEILHKFNVP…YDEEVKEEIE (236 aa)) is the ATP-grasp domain. ATP is bound by residues Lys-46, 53–55 (GRG), Glu-99, Ser-102, and Glu-107. Asn-199 and Asp-213 together coordinate Mg(2+). Substrate contacts are provided by residues Asn-264 and 321–323 (GIM).

Belongs to the succinate/malate CoA ligase beta subunit family. As to quaternary structure, heterotetramer of two alpha and two beta subunits. Mg(2+) is required as a cofactor.

It catalyses the reaction succinate + ATP + CoA = succinyl-CoA + ADP + phosphate. The enzyme catalyses GTP + succinate + CoA = succinyl-CoA + GDP + phosphate. The protein operates within carbohydrate metabolism; tricarboxylic acid cycle; succinate from succinyl-CoA (ligase route): step 1/1. In terms of biological role, succinyl-CoA synthetase functions in the citric acid cycle (TCA), coupling the hydrolysis of succinyl-CoA to the synthesis of either ATP or GTP and thus represents the only step of substrate-level phosphorylation in the TCA. The beta subunit provides nucleotide specificity of the enzyme and binds the substrate succinate, while the binding sites for coenzyme A and phosphate are found in the alpha subunit. The protein is Succinate--CoA ligase [ADP-forming] subunit beta of Wolbachia sp. subsp. Brugia malayi (strain TRS).